The sequence spans 484 residues: Auxin transporter-like protein 2 (484 aa).

Residues 1–59 (MLPQKQGEEAIVSSFNETDQQEGVVGREEEVEDHSFSVKNFLWHGGSVWDAWFSCASNQ) are Cytoplasmic-facing. The chain crosses the membrane as a helical span at residues 60–77 (VAQVLLTLPYSFSQLGML). Topologically, residues 78–79 (SG) are extracellular. A helical membrane pass occupies residues 80–100 (ILLQVFYGILGSWTAYLISVL). The Cytoplasmic portion of the chain corresponds to 101-135 (YVEYRSRKEKENVNFKNHVIQWFEVLDGLLGPYWK). The chain crosses the membrane as a helical span at residues 136-156 (ALGLAFNCTFLLFGSVIQLIA). Residues 157–172 (CASNIYYINDNLDKRT) are Extracellular-facing. The helical transmembrane segment at 173 to 193 (WTYIFGACCATTVFIPSFHNY) threads the bilayer. Topologically, residues 194 to 196 (RIW) are cytoplasmic. A helical membrane pass occupies residues 197 to 217 (SFLGLGMTTYTAWYLTIASIV). The Extracellular segment spans residues 218–232 (HGQAENVTHTGPKKL). N-linked (GlcNAc...) asparagine glycosylation occurs at N223. The chain crosses the membrane as a helical span at residues 233-253 (VLYFTGATNILYTFGGHAVTV). At 254-266 (EIMHAMWKPQKFK) the chain is on the cytoplasmic side. The chain crosses the membrane as a helical span at residues 267–287 (YIYLMATLYVFTLTIPSATAV). Residues 288 to 314 (YWAFGDELLNHSNAFSLLPKNGWRDGA) lie on the Extracellular side of the membrane. An N-linked (GlcNAc...) asparagine glycan is attached at N297. Residues 315–335 (VILMLIHQFITFGFACTPLYF) traverse the membrane as a helical segment. Over 336–356 (VWEKVIGMHDTRSICLRALAR) the chain is Cytoplasmic. Residues 357–377 (LPVVIPIWFLAIIFPFFGPIN) form a helical membrane-spanning segment. A topological domain (extracellular) is located at residue S378. The chain crosses the membrane as a helical span at residues 379–399 (AVGALLVSFTVYIIPSAAHML). Residues 400 to 425 (TYRKASARKNAAEKPPFFMPSWTAMY) are Cytoplasmic-facing. Residues 426–446 (IFNAFIVIWVLVVGFGFGGWA) traverse the membrane as a helical segment. At 447–484 (SMTNFIRQIDTFGLFAKCYQCKPPPVMAAAPPPHALHH) the chain is on the extracellular side.

It belongs to the amino acid/polyamine transporter 2 family. Amino acid/auxin permease (AAAP) (TC 2.A.18.1) subfamily. As to expression, shoots and roots of nodulating plants. Higher levels in roots, flowers and stems, lower in nodules, leaves, petioles and shoot apices.

It is found in the cell membrane. Its function is as follows. Carrier protein involved in proton-driven auxin influx. Mediates the formation of auxin gradient from developing leaves (site of auxin biosynthesis) to tips by contributing to the loading of auxin in vascular tissues and facilitating acropetal (base to tip) auxin transport within inner tissues of the root apex, and basipetal (tip to base) auxin transport within outer tissues of the root apex. May be involved in lateral roots and nodules formation. The chain is Auxin transporter-like protein 2 (LAX2) from Medicago truncatula (Barrel medic).